The primary structure comprises 84 residues: GTP cyclohydrolase 1 feedback regulatory protein (84 aa).

It belongs to the GFRP family. In terms of assembly, homopentamer. Forms a complex with GCH1 where a GCH1 homodecamer is sandwiched by two GFRP homopentamers.

It is found in the nucleus. The protein resides in the nucleus membrane. The protein localises to the cytoplasm. It localises to the cytosol. In terms of biological role, mediates tetrahydrobiopterin inhibition of GTP cyclohydrolase 1. This is GTP cyclohydrolase 1 feedback regulatory protein (gchfr) from Xenopus laevis (African clawed frog).